The chain runs to 81 residues: Cytotoxin 3b (81 aa).

Residues 1 to 21 form the signal peptide; that stretch reads MKTLLLTLVVVTIVCLDLGYT. Intrachain disulfides connect cysteine 24–cysteine 42, cysteine 35–cysteine 59, cysteine 63–cysteine 74, and cysteine 75–cysteine 80.

Belongs to the three-finger toxin family. Short-chain subfamily. Type IA cytotoxin sub-subfamily. As to quaternary structure, monomer in solution; Homodimer and oligomer in the presence of negatively charged lipids forming a pore with a size ranging between 20 and 30 Angstroms. As to expression, expressed by the venom gland.

Its subcellular location is the secreted. It is found in the target cell membrane. Functionally, shows cytolytic activity on many different cells by forming pore in lipid membranes. In vivo, increases heart rate or kills the animal by cardiac arrest. In addition, it binds to heparin with high affinity, interacts with Kv channel-interacting protein 1 (KCNIP1) in a calcium-independent manner, and binds to integrin alpha-V/beta-3 (ITGAV/ITGB3) with moderate affinity. In Naja atra (Chinese cobra), this protein is Cytotoxin 3b.